The sequence spans 530 residues: T-box transcription factor TBX21 (530 aa).

Residues 1–55 form a disordered region; it reads MGIVEPGCGDMLTGTEPMPSDEGRGPGADQQHRFFYPEPGAQDPTDRRAGSSLGT. S52 bears the Phosphoserine mark. At T55 the chain carries Phosphothreonine. Y76 and Y117 each carry phosphotyrosine. The T-box DNA-binding region spans 140–325; sequence LSNHLLWSKF…NNPFAKGFRE (186 aa). Y219 carries the phosphotyrosine; by ABL1 modification. S224 is modified (phosphoserine). Y265 bears the Phosphotyrosine; by ABL1 mark. The residue at position 302 (T302) is a Phosphothreonine. Y304 carries the phosphotyrosine; by ABL1 modification. K313 participates in a covalent cross-link: Glycyl lysine isopeptide (Lys-Gly) (interchain with G-Cter in ubiquitin). Residues 444–530 form a disordered region; the sequence is AGWFRPMRTL…EGQFYNYFPN (87 aa). A compositionally biased stretch (polar residues) spans 462–482; that stretch reads SEEQGSSPSLWPEVTSLQPEP. Residues 498–515 show a composition bias toward low complexity; that stretch reads SPYPSSGDSSSPAGAPSP. S508 bears the Phosphoserine mark. The residue at position 525 (Y525) is a Phosphotyrosine; by ITK.

Interacts with RUNX1 and RUNX3. Interacts with ITK. The phosphorylated form (at Tyr-525) interacts with GATA3. Interacts with ABL1. Interacts with RELA. The phosphorylated form (at Thr-302) interacts with NFATC2. Interacts with KDM6B. Interacts with SMARCA4 in a KDM6B-dependent manner. Interacts with CCTN1 and CDK9. Interacts with USP10. In terms of processing, phosphorylations at Ser-52, Tyr-76, Ser-224 and Ser-508 are regulated by mTORC1. Phosphorylation at Tyr-525 is essential for its interaction GATA3. Phosphorylation at Tyr-219, Tyr-265 and Tyr-304 enhances its transcriptional activator activity. Phosphorylation at Thr-302 is required for its interaction with NFATC2. Ubiquitinated at Lys-313, leading to its degradation by the proteasome. Ubiquitination is essential for controlling protein stability, binding to the T-box-binding element of the IFN-gamma promoter, and for interaction with NFATC2 through induction of phosphorylation at Thr-302. Deubiquitinated by USP10 leading to its stabilization. As to expression, T-cell specific. Expressed in regulatory T (TReg) cells.

Its subcellular location is the nucleus. Its function is as follows. Lineage-defining transcription factor which initiates Th1 lineage development from naive Th precursor cells both by activating Th1 genetic programs and by repressing the opposing Th2 and Th17 genetic programs. Activates transcription of a set of genes important for Th1 cell function, including those encoding IFN-gamma and the chemokine receptor CXCR3. Activates IFNG and CXCR3 genes in part by recruiting chromatin remodeling complexes including KDM6B, a SMARCA4-containing SWI/SNF-complex, and an H3K4me2-methyltransferase complex to their promoters and all of these complexes serve to establish a more permissive chromatin state conducive with transcriptional activation. Can activate Th1 genes also via recruitment of Mediator complex and P-TEFb (composed of CDK9 and CCNT1/cyclin-T1) in the form of the super elongation complex (SEC) to super-enhancers and associated genes in activated Th1 cells. Inhibits the Th17 cell lineage commitment by blocking RUNX1-mediated transactivation of Th17 cell-specific transcriptinal regulator RORC. Inhibits the Th2 cell lineage commitment by suppressing the production of Th2 cytokines, such as IL-4, IL-5, and IL- 13, via repression of transcriptional regulators GATA3 and NFATC2. Protects Th1 cells from amplifying aberrant type-I IFN response in an IFN-gamma abundant microenvironment by acting as a repressor of type-I IFN transcription factors and type-I IFN- stimulated genes. Acts as a regulator of antiviral B-cell responses; controls chronic viral infection by promoting the antiviral antibody IgG2a isotype switching and via regulation of a broad antiviral gene expression program. The chain is T-box transcription factor TBX21 (Tbx21) from Mus musculus (Mouse).